The following is a 98-amino-acid chain: Aspartyl/glutamyl-tRNA(Asn/Gln) amidotransferase subunit C (98 aa).

Positions 75–98 are disordered; it reads EQALSGAPDSDDNRFKVPAILDEA.

This sequence belongs to the GatC family. In terms of assembly, heterotrimer of A, B and C subunits.

The enzyme catalyses L-glutamyl-tRNA(Gln) + L-glutamine + ATP + H2O = L-glutaminyl-tRNA(Gln) + L-glutamate + ADP + phosphate + H(+). The catalysed reaction is L-aspartyl-tRNA(Asn) + L-glutamine + ATP + H2O = L-asparaginyl-tRNA(Asn) + L-glutamate + ADP + phosphate + 2 H(+). Functionally, allows the formation of correctly charged Asn-tRNA(Asn) or Gln-tRNA(Gln) through the transamidation of misacylated Asp-tRNA(Asn) or Glu-tRNA(Gln) in organisms which lack either or both of asparaginyl-tRNA or glutaminyl-tRNA synthetases. The reaction takes place in the presence of glutamine and ATP through an activated phospho-Asp-tRNA(Asn) or phospho-Glu-tRNA(Gln). The protein is Aspartyl/glutamyl-tRNA(Asn/Gln) amidotransferase subunit C of Pseudarthrobacter chlorophenolicus (strain ATCC 700700 / DSM 12829 / CIP 107037 / JCM 12360 / KCTC 9906 / NCIMB 13794 / A6) (Arthrobacter chlorophenolicus).